Reading from the N-terminus, the 457-residue chain is UDP-N-acetylmuramate--L-alanyl-gamma-D-glutamyl-meso-2,6-diaminoheptandioate ligase (457 aa).

110 to 116 provides a ligand contact to ATP; sequence GTHGKTT.

It belongs to the MurCDEF family. Mpl subfamily. It depends on Mg(2+) as a cofactor.

It localises to the secreted. The catalysed reaction is UDP-N-acetyl-alpha-D-muramate + L-alanyl-gamma-D-glutamyl-meso-2,6-diaminopimelate + ATP = UDP-N-acetyl-alpha-D-muramoyl-L-alanyl-gamma-D-glutamyl-meso-2,6-diaminopimelate + ADP + phosphate + H(+). It participates in cell wall biogenesis; peptidoglycan recycling. In terms of biological role, reutilizes the intact tripeptide L-alanyl-gamma-D-glutamyl-meso-diaminopimelate by linking it to UDP-N-acetylmuramate. The enzyme can also use the tetrapeptide L-alanyl-gamma-D-glutamyl-meso-2,6-diaminoheptanedioyl-D-alanine or the pentapeptide L-alanyl-gamma-D-glutamyl-meso-2,6-diaminoheptandioyl-D-alanyl-D-alanine in vivo and in vitro. In Escherichia coli (strain K12), this protein is UDP-N-acetylmuramate--L-alanyl-gamma-D-glutamyl-meso-2,6-diaminoheptandioate ligase.